A 307-amino-acid chain; its full sequence is Small ribosomal subunit biogenesis GTPase RsgA (307 aa).

Residues 1-21 (MPSEHPFSDGISTPNPKETMN) are disordered. Over residues 10–21 (GISTPNPKETMN) the composition is skewed to polar residues. The region spanning 85-242 (RQDAWKTKLI…LIDSPGLQEF (158 aa)) is the CP-type G domain. Residues 135–138 (NKAD) and 184–192 (GQSGMGKST) contribute to the GTP site. Positions 266, 271, 273, and 279 each coordinate Zn(2+).

It belongs to the TRAFAC class YlqF/YawG GTPase family. RsgA subfamily. As to quaternary structure, monomer. Associates with 30S ribosomal subunit, binds 16S rRNA. It depends on Zn(2+) as a cofactor.

The protein resides in the cytoplasm. Functionally, one of several proteins that assist in the late maturation steps of the functional core of the 30S ribosomal subunit. Helps release RbfA from mature subunits. May play a role in the assembly of ribosomal proteins into the subunit. Circularly permuted GTPase that catalyzes slow GTP hydrolysis, GTPase activity is stimulated by the 30S ribosomal subunit. In Neisseria gonorrhoeae (strain ATCC 700825 / FA 1090), this protein is Small ribosomal subunit biogenesis GTPase RsgA.